Consider the following 695-residue polypeptide: Variediene synthase (695 aa).

Residues 1–23 form a disordered region; it reads MVPTSLSPDDTSDPVPRSSSDIQ. Positions 7 to 332 are terpene cyclase; the sequence is SPDDTSDPVP…PRYHPWLCEE (326 aa). Aspartate 98 serves as a coordination point for Mg(2+). Substrate-binding positions include aspartate 98, 184-187, asparagine 228, 232-236, and 324-325; these read RIID, SFDIE, and RY. The short motif at 98–102 is the DDXXD 1 element; it reads DNVVE. The NSE/DTE motif lies at 228–236; that stretch reads NDYFSFDIE. Positions 353-392 are disordered; the sequence is RRSISGDSISSESSVWSGASDRSARSSVSSAPSLDEGKEP. Positions 357 to 385 are enriched in low complexity; it reads SGDSISSESSVWSGASDRSARSSVSSAPS. Lysine 415, arginine 418, and histidine 447 together coordinate isopentenyl diphosphate. Mg(2+) is bound by residues aspartate 454 and aspartate 458. Residues 454–458 carry the DDXXD 2 motif; the sequence is DDIED. Dimethylallyl diphosphate is bound at residue arginine 463. Residue arginine 464 participates in isopentenyl diphosphate binding. Residues lysine 541, threonine 542, glutamine 579, asparagine 586, lysine 595, and lysine 605 each coordinate dimethylallyl diphosphate.

In the N-terminal section; belongs to the terpene synthase family. It in the C-terminal section; belongs to the FPP/GGPP synthase family. In terms of assembly, hexamer. It depends on Mg(2+) as a cofactor.

The catalysed reaction is isopentenyl diphosphate + (2E,6E)-farnesyl diphosphate = (2E,6E,10E)-geranylgeranyl diphosphate + diphosphate. It catalyses the reaction (2E,6E,10E)-geranylgeranyl diphosphate = variediene + diphosphate. Its pathway is secondary metabolite biosynthesis; terpenoid biosynthesis. Its function is as follows. Bifunctional terpene synthase converts DMAPP and IPP, and also GGPP, into variediene as a single product. The C-terminal prenyltransferase domain of AbVS catalyzes formation of GGPP, whereas the N-terminal terpene cyclase domain catalyzes the cyclization of GGPP to variediene. The protein is Variediene synthase of Aspergillus brasiliensis (strain CBS 101740 / IMI 381727 / IBT 21946).